The sequence spans 360 residues: Probable L-asparaginase 1 (360 aa).

A signal peptide spans 1-16 (MWRSIISFLFFSVALC). N-linked (GlcNAc...) asparagine glycans are attached at residues Asn27, Asn35, and Asn40. The region spanning 39-359 (PNVTIFAMGG…QNITDIFSLE (321 aa)) is the Asparaginase/glutaminase domain. The active-site O-isoaspartyl threonine intermediate is Thr49. Residue Asn82 is glycosylated (N-linked (GlcNAc...) asparagine). Ser96 is a binding site for substrate. Asn106 carries an N-linked (GlcNAc...) asparagine glycan. 129 to 130 (TD) contacts substrate. Asn144, Asn179, Asn246, Asn302, and Asn351 each carry an N-linked (GlcNAc...) asparagine glycan.

It belongs to the asparaginase 1 family.

The protein localises to the secreted. It localises to the cell wall. The enzyme catalyses L-asparagine + H2O = L-aspartate + NH4(+). In Schizosaccharomyces pombe (strain 972 / ATCC 24843) (Fission yeast), this protein is Probable L-asparaginase 1.